We begin with the raw amino-acid sequence, 293 residues long: FAS1 domain-containing protein DEHA2G15708g (293 aa).

A signal peptide spans 1-18 (MKLSSILYVSVLAHLVMS). A compositionally biased stretch (basic and acidic residues) spans 76–87 (DHIGENEKREAK). Residues 76–126 (DHIGENEKREAKNVYNLQSLKEGLDDENDKREGNVNKPEVSEEGSNKGDKR) form a disordered region. Positions 141–290 (QNLLQSILPQ…GYIFVINDVL (150 aa)) constitute an FAS1 domain.

The protein localises to the vacuole. The sequence is that of FAS1 domain-containing protein DEHA2G15708g from Debaryomyces hansenii (strain ATCC 36239 / CBS 767 / BCRC 21394 / JCM 1990 / NBRC 0083 / IGC 2968) (Yeast).